The sequence spans 707 residues: Drebrin (707 aa).

Alanine 2 is modified (N-acetylalanine). The ADF-H domain occupies 3-134 (GVSFSGHRLE…DAGAIGQRLS (132 aa)). Residues serine 141 and serine 142 each carry the phosphoserine modification. The segment covering 209-236 (ERMEQERQEQEERERRYREREQQIEEHR) has biased composition (basic and acidic residues). Disordered regions lie at residues 209–438 (ERME…VCKE), 452–497 (AEEP…TSVA), 531–557 (WPGN…AEAS), 582–609 (LLNF…PLAA), and 630–707 (LEPE…EGGD). Phosphoserine is present on serine 241. Basic and acidic residues predominate over residues 288 to 298 (DNPREFFRQQE). Residues 329–343 (SDSGPSSSSSSSSSP) show a composition bias toward low complexity. Serine 342 carries the phosphoserine modification. Polar residues predominate over residues 355-364 (RTPNLSSSLP). Phosphothreonine occurs at positions 377 and 381. Residues 380–395 (PTRSPSDSSTASTPIT) show a composition bias toward polar residues. Residues serine 383, serine 385, and serine 391 each carry the phosphoserine modification. At threonine 392 the chain carries Phosphothreonine. The segment covering 409 to 420 (QPPPPPPPPPPA) has biased composition (pro residues). Residues 428–438 (PRLDGEEVCKE) are compositionally biased toward basic and acidic residues. A Phosphoserine modification is found at serine 467. Threonine 549 is modified (phosphothreonine). The segment covering 639-652 (NGETTQKEGTQQAS) has biased composition (polar residues). Serine 659 carries the phosphoserine modification. The span at 695–707 (PVPEEEEGFEGGD) shows a compositional bias: acidic residues.

In terms of assembly, interacts with RUFY. Interacts with CXCR4; this interaction is enhanced by antigenic stimulation. Interacts (via ADF-H domain) with ZMYND8 (via N-terminus); the interaction leads to sequestering of ZMYND8 in the cytoplasm. Post-translationally, ISGylated. Brain neurons.

Its subcellular location is the cytoplasm. It is found in the cell projection. The protein localises to the dendrite. It localises to the cell cortex. The protein resides in the cell junction. Its subcellular location is the growth cone. Functionally, actin cytoskeleton-organizing protein that plays a role in the formation of cell projections. Required for actin polymerization at immunological synapses (IS) and for the recruitment of the chemokine receptor CXCR4 to IS. Plays a role in dendritic spine morphogenesis and organization, including the localization of the dopamine receptor DRD1 to the dendritic spines. Involved in memory-related synaptic plasticity in the hippocampus. The polypeptide is Drebrin (Dbn1) (Rattus norvegicus (Rat)).